Here is a 172-residue protein sequence, read N- to C-terminus: Adenylate kinase isoenzyme 6 (172 aa).

Glycine 13, glycine 15, lysine 16, threonine 17, and threonine 18 together coordinate ATP. The NMP stretch occupies residues 33–56; sequence NVGDLAREEQLYDGYDEEYDCPIL. Residues 33-56 are NMPbind; the sequence is NVGDLAREEQLYDGYDEEYDCPIL. An LID region spans residues 108-118; sequence TRGYNEKKLTD. ATP is bound by residues arginine 109 and lysine 148.

It belongs to the adenylate kinase family. AK6 subfamily. In terms of assembly, monomer and homodimer. Interacts with small ribosomal subunit protein uS11. Not a structural component of 43S pre-ribosomes, but transiently interacts with them by binding to uS11. Interacts with COIL (via C-terminus). As to expression, expressed in heart, brain, placenta, lung, liver, skeletal muscle, kidney, pancreas, chorionic villi and the central nervous system.

Its subcellular location is the cytoplasm. It localises to the nucleus. The protein resides in the nucleoplasm. The protein localises to the cajal body. It carries out the reaction AMP + ATP = 2 ADP. The catalysed reaction is ATP + H2O = ADP + phosphate + H(+). In terms of biological role, broad-specificity nucleoside monophosphate (NMP) kinase that catalyzes the reversible transfer of the terminal phosphate group between nucleoside triphosphates and monophosphates. Also has ATPase activity. Involved in the late cytoplasmic maturation steps of the 40S ribosomal particles, specifically 18S rRNA maturation. While NMP activity is not required for ribosome maturation, ATPase activity is. Associates transiently with small ribosomal subunit protein uS11. ATP hydrolysis breaks the interaction with uS11. May temporarily remove uS11 from the ribosome to enable a conformational change of the ribosomal RNA that is needed for the final maturation step of the small ribosomal subunit. Its NMP activity may have a role in nuclear energy homeostasis. AMP and dAMP are the preferred substrates, but CMP and dCMP are also good substrates. IMP is phosphorylated to a much lesser extent. All nucleoside triphosphates ATP, GTP, UTP, CTP, dATP, dCTP, dGTP, and TTP are accepted as phosphate donors. CTP is the best phosphate donor, followed by UTP, ATP, GTP and dCTP. May be involved in regulation of Cajal body (CB) formation. The sequence is that of Adenylate kinase isoenzyme 6 from Homo sapiens (Human).